Here is a 522-residue protein sequence, read N- to C-terminus: ATP synthase subunit alpha (522 aa).

176–183 (GDRQTGKT) provides a ligand contact to ATP.

The protein belongs to the ATPase alpha/beta chains family. As to quaternary structure, F-type ATPases have 2 components, CF(1) - the catalytic core - and CF(0) - the membrane proton channel. CF(1) has five subunits: alpha(3), beta(3), gamma(1), delta(1), epsilon(1). CF(0) has four main subunits: a(1), b(1), b'(1) and c(9-12).

The protein resides in the cell membrane. The enzyme catalyses ATP + H2O + 4 H(+)(in) = ADP + phosphate + 5 H(+)(out). Its function is as follows. Produces ATP from ADP in the presence of a proton gradient across the membrane. The alpha chain is a regulatory subunit. In Chloroflexus aurantiacus (strain ATCC 29366 / DSM 635 / J-10-fl), this protein is ATP synthase subunit alpha.